The chain runs to 1064 residues: Leucine--tRNA ligase (1064 aa).

A disordered region spans residues 1–25 (MARAMSETAEPGARTGAADTTVAPT). Positions 106–117 (PYPSGSGLHVGH) match the 'HIGH' region motif. Positions 435–456 (GRPGGGTEPADTAGPEAGADPA) are disordered. The 'KMSKS' region motif lies at 831–835 (KMGKS). ATP is bound at residue K834.

This sequence belongs to the class-I aminoacyl-tRNA synthetase family.

It localises to the cytoplasm. It catalyses the reaction tRNA(Leu) + L-leucine + ATP = L-leucyl-tRNA(Leu) + AMP + diphosphate. In Frankia casuarinae (strain DSM 45818 / CECT 9043 / HFP020203 / CcI3), this protein is Leucine--tRNA ligase.